The following is an 825-amino-acid chain: Taste receptor cell protein 1 (825 aa).

The signal sequence occupies residues 1-21 (MDKQWFPAAGILLAALLVVSA). Disordered regions lie at residues 66–97 (EREP…GPSG) and 299–322 (TSPS…SASP). Positions 302–322 (SQASSLHSPRPSSASPLSASP) are enriched in low complexity.

As to expression, expression is restricted to circumvallate papillae.

The polypeptide is Taste receptor cell protein 1 (Trcg1) (Mus musculus (Mouse)).